The primary structure comprises 160 residues: Cytochrome b6-f complex subunit 4 (160 aa).

Helical transmembrane passes span 36 to 56 (LLYI…GLAV), 95 to 115 (LLGV…PFLE), and 131 to 151 (TVFL…ALPI).

The protein belongs to the cytochrome b family. PetD subfamily. In terms of assembly, the 4 large subunits of the cytochrome b6-f complex are cytochrome b6, subunit IV (17 kDa polypeptide, petD), cytochrome f and the Rieske protein, while the 4 small subunits are petG, petL, petM and petN. The complex functions as a dimer.

Its subcellular location is the plastid. The protein localises to the chloroplast thylakoid membrane. Functionally, component of the cytochrome b6-f complex, which mediates electron transfer between photosystem II (PSII) and photosystem I (PSI), cyclic electron flow around PSI, and state transitions. This chain is Cytochrome b6-f complex subunit 4, found in Marchantia polymorpha (Common liverwort).